The following is a 181-amino-acid chain: Insulin-like growth factor 2 (181 aa).

Positions 1-24 (MGIPMRKPLLVLLVFLALASCCYA) are cleaved as a signal peptide. Residues 25 to 52 (AYRPSETLCGGELVDTLQFVCGDRGFYF) are b. Disulfide bonds link C33–C71, C45–C84, and C70–C75. The tract at residues 53 to 64 (SRPASRVNRRSR) is c. The a stretch occupies residues 65–85 (GIVEECCFRSCDLALLETYCA). A d region spans residues 86-91 (TPAKSE). A propeptide spans 92 to 181 (RDVSTPPTVL…ASPEASGHRK (90 aa)) (e peptide). The disordered stretch occupies residues 151–181 (EAKRHRPLTARPTRDPAAHGGASPEASGHRK). O-linked (GalNAc...) threonine glycosylation occurs at T163.

The protein belongs to the insulin family. In terms of assembly, interacts with MYORG; this interaction is required for IGF2 secretion. Interacts with integrins ITGAV:ITGB3 and ITGA6:ITGB4; integrin-binding is required for IGF2 signaling. Interacts with IGFBP2. Post-translationally, proteolytically processed by PCSK4, proIGF2 is cleaved at Arg-128 and Arg-92 to generate big-IGF2 and mature IGF2.

The protein localises to the secreted. In terms of biological role, the insulin-like growth factors possess growth-promoting activity. Major fetal growth hormone in mammals. Plays a key role in regulating fetoplacental development. IGF2 is influenced by placental lactogen. Also involved in tissue differentiation. In adults, involved in glucose metabolism in adipose tissue, skeletal muscle and liver. Acts as a ligand for integrin which is required for IGF2 signaling. Positively regulates myogenic transcription factor MYOD1 function by facilitating the recruitment of transcriptional coactivators, thereby controlling muscle terminal differentiation. Inhibits myoblast differentiation and modulates metabolism via increasing the mitochondrial respiration rate. Preptin undergoes glucose-mediated co-secretion with insulin, and acts as a physiological amplifier of glucose-mediated insulin secretion. Exhibits osteogenic properties by increasing osteoblast mitogenic activity through phosphoactivation of MAPK1 and MAPK3. The polypeptide is Insulin-like growth factor 2 (Sus scrofa (Pig)).